A 1818-amino-acid chain; its full sequence is Cytadherence high molecular weight protein 2 (1818 aa).

Coiled-coil stretches lie at residues 31 to 880 (LESA…KQRE), 919 to 1607 (ELKI…DNKH), 1644 to 1755 (HLFE…QAVQ), and 1786 to 1817 (LATQ…QKAA).

Phosphorylated mainly on serine residues.

Its function is as follows. Component of the cytoskeleton-like structure which stabilizes the shape of the wall-less Mycoplasma. This cytoskeleton-like network of accessory proteins containing HMW proteins 1 to 5 allows the proper anchoring of cytadhesin proteins in the mycoplasmal membrane at the attachment organelle. In Mycoplasma pneumoniae (strain ATCC 29342 / M129 / Subtype 1) (Mycoplasmoides pneumoniae), this protein is Cytadherence high molecular weight protein 2 (hmw2).